The primary structure comprises 343 residues: S-adenosylmethionine:tRNA ribosyltransferase-isomerase (343 aa).

The protein belongs to the QueA family. As to quaternary structure, monomer.

The protein localises to the cytoplasm. It catalyses the reaction 7-aminomethyl-7-carbaguanosine(34) in tRNA + S-adenosyl-L-methionine = epoxyqueuosine(34) in tRNA + adenine + L-methionine + 2 H(+). Its pathway is tRNA modification; tRNA-queuosine biosynthesis. Its function is as follows. Transfers and isomerizes the ribose moiety from AdoMet to the 7-aminomethyl group of 7-deazaguanine (preQ1-tRNA) to give epoxyqueuosine (oQ-tRNA). This Coxiella burnetii (strain Dugway 5J108-111) protein is S-adenosylmethionine:tRNA ribosyltransferase-isomerase.